Consider the following 125-residue polypeptide: uncharacterized protein (125 aa).

One can recognise an HTH dtxR-type domain in the interval 1–63 (MSQSIEDYLE…YEPYIGITLT (63 aa)).

The protein belongs to the DtxR/MntR family.

This is an uncharacterized protein from Methanocaldococcus jannaschii (strain ATCC 43067 / DSM 2661 / JAL-1 / JCM 10045 / NBRC 100440) (Methanococcus jannaschii).